The sequence spans 720 residues: 1,4-alpha-glucan branching enzyme GlgB (720 aa).

Catalysis depends on D400, which acts as the Nucleophile. E453 (proton donor) is an active-site residue.

It belongs to the glycosyl hydrolase 13 family. GlgB subfamily. As to quaternary structure, monomer.

It carries out the reaction Transfers a segment of a (1-&gt;4)-alpha-D-glucan chain to a primary hydroxy group in a similar glucan chain.. It participates in glycan biosynthesis; glycogen biosynthesis. Catalyzes the formation of the alpha-1,6-glucosidic linkages in glycogen by scission of a 1,4-alpha-linked oligosaccharide from growing alpha-1,4-glucan chains and the subsequent attachment of the oligosaccharide to the alpha-1,6 position. The sequence is that of 1,4-alpha-glucan branching enzyme GlgB from Chlamydia pneumoniae (Chlamydophila pneumoniae).